A 220-amino-acid chain; its full sequence is Response regulator protein TmoT (220 aa).

The 115-residue stretch at 21–135 (VIYIVDDDNA…DLLGAIRTAL (115 aa)) folds into the Response regulatory domain. Asp70 is modified (4-aspartylphosphate). One can recognise an HTH luxR-type domain in the interval 151–216 (LKASYESLSK…DLVRVTERLK (66 aa)). A DNA-binding region (H-T-H motif) is located at residues 175–194 (NKQTALELDISEATVKVHRH).

In terms of processing, phosphorylated by TmoS.

Its subcellular location is the cytoplasm. Functionally, member of the two-component regulatory system TmoS/TmoT involved in the regulation of toluene degradation. Induces expression of tmoX operon. This chain is Response regulator protein TmoT (tmoT), found in Ectopseudomonas mendocina (Pseudomonas mendocina).